Reading from the N-terminus, the 286-residue chain is Aquaporin PIP1-1 (286 aa).

Positions 1–34 (MEGKEEDVRLGANKFSERQPIGTAAQSDKGYKEP) are disordered. Topologically, residues 1–54 (MEGKEEDVRLGANKFSERQPIGTAAQSDKGYKEPPPAPLFEPGELTSWSFYRAG) are cytoplasmic. The chain crosses the membrane as a helical span at residues 55–75 (IAEFMATFLFLYITILTVMGV). Topologically, residues 76–88 (VKSNSKCSTVGIQ) are extracellular. Residues 89–109 (GIAWAFGGMIFALVYCTAGIS) traverse the membrane as a helical segment. Topologically, residues 110 to 131 (GGHINPAVTFGLFLARKLSLTR) are cytoplasmic. The short motif at 114 to 116 (NPA) is the NPA 1 element. A helical membrane pass occupies residues 132–152 (ALFYMVMQCLGAICGAGVVKG). Residues 153-174 (YQKGLYESNGGGANVVAPGYTK) are Extracellular-facing. A helical membrane pass occupies residues 175–195 (GDGLGAEIVGTFILVYTVFSA). Residues 196–208 (TDAKRNARDSHVP) are Cytoplasmic-facing. Residues 209–229 (ILAPLPIGFAVFLVHLATIPI) traverse the membrane as a helical segment. Residues 230-256 (TGTGINPARSLGAAIIYNKKHAWDDHW) lie on the Extracellular side of the membrane. An NPA 2 motif is present at residues 235–237 (NPA). A helical membrane pass occupies residues 257 to 277 (IFWVGPFIGAALAAIYHQIVI). At 278-286 (RAIPFKSRP) the chain is on the cytoplasmic side.

Belongs to the MIP/aquaporin (TC 1.A.8) family. PIP (TC 1.A.8.11) subfamily. Expressed in leaves, roots, stems, flowers and fruits, with highest levels in roots.

The protein resides in the cell membrane. Its function is as follows. Water channel required to facilitate the transport of water across cell membrane; mercury-insensitive. Promotes primary root elongation and root hair formation. Contributes to the tolerance to multiple abiotic stresses including salt (NaCl), cold and water deprivation, by modulating cytosolic K(+)/Na(+) ratio, maintaining osmotic balance, and reducing membrane injury (e.g. oxidative injury). Also regulates the expression of abscisic acid (ABA)-responsive genes during dehydration and salt stresses. This is Aquaporin PIP1-1 from Musa acuminata (Banana).